A 94-amino-acid polypeptide reads, in one-letter code: Alpha-galactosyl-binding lectin (94 aa).

As to quaternary structure, homodimer. In terms of processing, contains three disulfide bonds.

Alpha-galactosyl-binding lectin with preference for galactose-alpha-1,4-galactose. This is Alpha-galactosyl-binding lectin from Lyophyllum decastes (Fried chicken mushroom).